A 456-amino-acid chain; its full sequence is Bifunctional protein GlmU (456 aa).

The pyrophosphorylase stretch occupies residues 1 to 229 (MLNSAMSVVI…ISETDGVNNR (229 aa)). UDP-N-acetyl-alpha-D-glucosamine-binding positions include 11–14 (LAAG), K25, Q76, 81–82 (GT), 103–105 (YGD), G140, E154, N169, and N227. A Mg(2+)-binding site is contributed by D105. A Mg(2+)-binding site is contributed by N227. The interval 230 to 250 (LQLSRLERIYQAEQAEKLLLS) is linker. The interval 251 to 456 (GVMLRDPARF…QGWQRPVKKK (206 aa)) is N-acetyltransferase. 2 residues coordinate UDP-N-acetyl-alpha-D-glucosamine: R333 and K351. H363 (proton acceptor) is an active-site residue. Positions 366 and 377 each coordinate UDP-N-acetyl-alpha-D-glucosamine. Residues A380, 386 to 387 (NY), S405, A423, and R440 contribute to the acetyl-CoA site.

This sequence in the N-terminal section; belongs to the N-acetylglucosamine-1-phosphate uridyltransferase family. It in the C-terminal section; belongs to the transferase hexapeptide repeat family. As to quaternary structure, homotrimer. Requires Mg(2+) as cofactor.

Its subcellular location is the cytoplasm. It carries out the reaction alpha-D-glucosamine 1-phosphate + acetyl-CoA = N-acetyl-alpha-D-glucosamine 1-phosphate + CoA + H(+). The catalysed reaction is N-acetyl-alpha-D-glucosamine 1-phosphate + UTP + H(+) = UDP-N-acetyl-alpha-D-glucosamine + diphosphate. Its pathway is nucleotide-sugar biosynthesis; UDP-N-acetyl-alpha-D-glucosamine biosynthesis; N-acetyl-alpha-D-glucosamine 1-phosphate from alpha-D-glucosamine 6-phosphate (route II): step 2/2. It functions in the pathway nucleotide-sugar biosynthesis; UDP-N-acetyl-alpha-D-glucosamine biosynthesis; UDP-N-acetyl-alpha-D-glucosamine from N-acetyl-alpha-D-glucosamine 1-phosphate: step 1/1. The protein operates within bacterial outer membrane biogenesis; LPS lipid A biosynthesis. Its function is as follows. Catalyzes the last two sequential reactions in the de novo biosynthetic pathway for UDP-N-acetylglucosamine (UDP-GlcNAc). The C-terminal domain catalyzes the transfer of acetyl group from acetyl coenzyme A to glucosamine-1-phosphate (GlcN-1-P) to produce N-acetylglucosamine-1-phosphate (GlcNAc-1-P), which is converted into UDP-GlcNAc by the transfer of uridine 5-monophosphate (from uridine 5-triphosphate), a reaction catalyzed by the N-terminal domain. The sequence is that of Bifunctional protein GlmU from Salmonella choleraesuis (strain SC-B67).